Reading from the N-terminus, the 133-residue chain is Fluoride-specific ion channel FluC (133 aa).

The next 4 helical transmembrane spans lie at 4–24, 35–55, 66–86, and 107–127; these read LLWI…LSVL, WGTL…WVLA, VFIF…SLES, and VLGL…LGGP. Na(+)-binding residues include glycine 74 and threonine 77.

This sequence belongs to the fluoride channel Fluc/FEX (TC 1.A.43) family.

The protein localises to the cell inner membrane. The catalysed reaction is fluoride(in) = fluoride(out). Na(+) is not transported, but it plays an essential structural role and its presence is essential for fluoride channel function. In terms of biological role, fluoride-specific ion channel. Important for reducing fluoride concentration in the cell, thus reducing its toxicity. This Salinibacter ruber (strain DSM 13855 / M31) protein is Fluoride-specific ion channel FluC.